A 364-amino-acid chain; its full sequence is MQERHTEQDYRALLIADTPIIDVRAPIEFEQGAMPAAINLPLMNNDERAAVGTCYKQQGSDAALALGHKLVAGEIRQQRMDAWRAACLQNPQGILCCARGGQRSHIVQSWLYAAGIDYPLVEGGYKALRQAAIQATIELAQKPIVLIGGCTGSGKTLLVQQQPNGVDLEGLARHRGSAFGRTLQPQLSQASFENLLAAEMLKTDARQDLRLWVLEDESRMIGSNHLPECLRERMTQAAIAVVEDPFEIRLERLNEEYFLRMHHDFTHAYGDEQGWQEYCEYLHHGLSAIKRRLGLQRYNELAAQLDTALTTQLTTDSTDGHLAWLVPLLKEYYDPMYRYQLEKKAEKVVFRGEWAEVAEWVKTQ.

In terms of domain architecture, Rhodanese spans 14-137; it reads LIADTPIIDV…LRQAAIQATI (124 aa). The active-site S-selanylcysteine intermediate is the Cys97.

It belongs to the SelU family. As to quaternary structure, monomer.

The catalysed reaction is 5-methylaminomethyl-2-thiouridine(34) in tRNA + selenophosphate + (2E)-geranyl diphosphate + H2O + H(+) = 5-methylaminomethyl-2-selenouridine(34) in tRNA + (2E)-thiogeraniol + phosphate + diphosphate. It carries out the reaction 5-methylaminomethyl-2-thiouridine(34) in tRNA + (2E)-geranyl diphosphate = 5-methylaminomethyl-S-(2E)-geranyl-thiouridine(34) in tRNA + diphosphate. It catalyses the reaction 5-methylaminomethyl-S-(2E)-geranyl-thiouridine(34) in tRNA + selenophosphate + H(+) = 5-methylaminomethyl-2-(Se-phospho)selenouridine(34) in tRNA + (2E)-thiogeraniol. The enzyme catalyses 5-methylaminomethyl-2-(Se-phospho)selenouridine(34) in tRNA + H2O = 5-methylaminomethyl-2-selenouridine(34) in tRNA + phosphate. Functionally, involved in the post-transcriptional modification of the uridine at the wobble position (U34) of tRNA(Lys), tRNA(Glu) and tRNA(Gln). Catalyzes the conversion of 2-thiouridine (S2U-RNA) to 2-selenouridine (Se2U-RNA). Acts in a two-step process involving geranylation of 2-thiouridine (S2U) to S-geranyl-2-thiouridine (geS2U) and subsequent selenation of the latter derivative to 2-selenouridine (Se2U) in the tRNA chain. The sequence is that of tRNA 2-selenouridine synthase from Shigella sonnei (strain Ss046).